Consider the following 159-residue polypeptide: MKIKIICVGKIKEKYLKDGIAEYQKRLSRFTQFEIIELADEKTPEKASQAENEKIMEKEANRILSKIGNRDYVIALAIEGKQYASEEFSQFITDITIQGFSDITFIIGGSLGLHSKIKQKAHALISFGRLTLPHQLMRLVLTEQIYRAFMIQEGSPYHK.

S-adenosyl-L-methionine contacts are provided by residues L76, G108, and 127-132; that span reads FGRLTL.

Belongs to the RNA methyltransferase RlmH family. Homodimer.

It is found in the cytoplasm. The catalysed reaction is pseudouridine(1915) in 23S rRNA + S-adenosyl-L-methionine = N(3)-methylpseudouridine(1915) in 23S rRNA + S-adenosyl-L-homocysteine + H(+). Functionally, specifically methylates the pseudouridine at position 1915 (m3Psi1915) in 23S rRNA. The protein is Ribosomal RNA large subunit methyltransferase H of Streptococcus uberis (strain ATCC BAA-854 / 0140J).